The chain runs to 31 residues: Cliotide T10 (31 aa).

The segment at residues 1-31 is a cross-link (cyclopeptide (Gly-Asn)); that stretch reads GIPCGESCVYIPCTVTALLGCSCKDKVCYKN. 3 cysteine pairs are disulfide-bonded: C4-C21, C8-C23, and C13-C28.

Post-translationally, contains 3 disulfide bonds. This is a cyclic peptide. In terms of tissue distribution, expressed in seed, root and nodule but not in flower, stem, shoot, leaf and pod (at protein level).

Functionally, probably participates in a plant defense mechanism. This chain is Cliotide T10, found in Clitoria ternatea (Butterfly pea).